We begin with the raw amino-acid sequence, 775 residues long: GRIP and coiled-coil domain-containing protein 1 (775 aa).

Positions 13-61 (SKKDLLETIETQKKQLLQYQARLKDVVRAYKSLLKEKEALEASIKVLSV) form a coiled coil. Residues 84–93 (DDRCSTHSED) are compositionally biased toward basic and acidic residues. 2 disordered regions span residues 84-153 (DDRC…AGGE) and 614-639 (GLPG…SDSL). Composition is skewed to low complexity over residues 94 to 110 (STGT…LTST), 133 to 147 (ASWS…SGDG), and 629 to 638 (DPADTSSSDS). Residues 153–763 (EVDKRLHQLK…PEEKQVIMRL (611 aa)) are a coiled coil. The region spanning 713–763 (QSREGANLEYLKNIIYRFLTLPDSLGRQQTLTAILTILHFSPEEKQVIMRL) is the GRIP domain.

The protein resides in the cytoplasm. Its subcellular location is the golgi apparatus membrane. Probably involved in maintaining Golgi structure. The protein is GRIP and coiled-coil domain-containing protein 1 (GCC1) of Homo sapiens (Human).